The sequence spans 185 residues: Elongation factor P (185 aa).

This sequence belongs to the elongation factor P family.

The protein resides in the cytoplasm. The protein operates within protein biosynthesis; polypeptide chain elongation. In terms of biological role, involved in peptide bond synthesis. Stimulates efficient translation and peptide-bond synthesis on native or reconstituted 70S ribosomes in vitro. Probably functions indirectly by altering the affinity of the ribosome for aminoacyl-tRNA, thus increasing their reactivity as acceptors for peptidyl transferase. The sequence is that of Elongation factor P from Dictyoglomus thermophilum (strain ATCC 35947 / DSM 3960 / H-6-12).